Reading from the N-terminus, the 535-residue chain is 3-hydroxyindolin-2-one monooxygenase (535 aa).

Helical transmembrane passes span 14-34 (VVQC…LLAI) and 469-489 (ICAG…NLIY). A heme-binding site is contributed by C470.

It belongs to the cytochrome P450 family. It depends on heme as a cofactor.

The protein resides in the membrane. The enzyme catalyses 3-hydroxyindolin-2-one + reduced [NADPH--hemoprotein reductase] + O2 = 2-hydroxy-2H-1,4-benzoxazin-3(4H)-one + oxidized [NADPH--hemoprotein reductase] + H2O + H(+). It functions in the pathway secondary metabolite biosynthesis; 2,4-dihydroxy-1,4-benzoxazin-3-one biosynthesis; 2,4-dihydroxy-1,4-benzoxazin-3-one from indoleglycerol phosphate: step 4/5. Catalyzes the conversion of 3-hydroxyindolin-2-one to 2-hydroxy-1,4-benzoxazin-3-one (HBOA). This Zea mays (Maize) protein is 3-hydroxyindolin-2-one monooxygenase (CYP71C1).